The following is a 447-amino-acid chain: Argininosuccinate synthase (447 aa).

Residues 17 to 25 (AFSGGLDTS) and Ala-43 contribute to the ATP site. Tyr-99 provides a ligand contact to L-citrulline. Residues Gly-129 and Thr-131 each coordinate ATP. L-aspartate-binding residues include Thr-131, Asn-135, and Asp-136. Asn-135 contributes to the L-citrulline binding site. Asp-136 contacts ATP. L-citrulline-binding residues include Arg-139 and Ser-192. Asp-194 is an ATP binding site. L-citrulline-binding residues include Thr-201, Glu-203, and Glu-280.

It belongs to the argininosuccinate synthase family. Type 2 subfamily. In terms of assembly, homotetramer.

It localises to the cytoplasm. The enzyme catalyses L-citrulline + L-aspartate + ATP = 2-(N(omega)-L-arginino)succinate + AMP + diphosphate + H(+). It functions in the pathway amino-acid biosynthesis; L-arginine biosynthesis; L-arginine from L-ornithine and carbamoyl phosphate: step 2/3. This chain is Argininosuccinate synthase, found in Shigella dysenteriae serotype 1 (strain Sd197).